Here is a 77-residue protein sequence, read N- to C-terminus: MSSIDKRIKEIVAEQLGVDEGQVTNEASFMDDLGADSLDTVELVMALEEEFDIEISDEDAEKIQSVQDAIDYITDHT.

Residues 2 to 77 form the Carrier domain; sequence SSIDKRIKEI…DAIDYITDHT (76 aa). The residue at position 37 (Ser-37) is an O-(pantetheine 4'-phosphoryl)serine.

It belongs to the acyl carrier protein (ACP) family. Post-translationally, 4'-phosphopantetheine is transferred from CoA to a specific serine of apo-ACP by AcpS. This modification is essential for activity because fatty acids are bound in thioester linkage to the sulfhydryl of the prosthetic group.

Its subcellular location is the cytoplasm. It functions in the pathway lipid metabolism; fatty acid biosynthesis. In terms of biological role, carrier of the growing fatty acid chain in fatty acid biosynthesis. The protein is Acyl carrier protein of Geotalea uraniireducens (strain Rf4) (Geobacter uraniireducens).